Reading from the N-terminus, the 275-residue chain is 4-diphosphocytidyl-2-C-methyl-D-erythritol kinase (275 aa).

Lys-14 is a catalytic residue. Pro-98–Ser-108 provides a ligand contact to ATP. Residue Asp-140 is part of the active site.

This sequence belongs to the GHMP kinase family. IspE subfamily.

The catalysed reaction is 4-CDP-2-C-methyl-D-erythritol + ATP = 4-CDP-2-C-methyl-D-erythritol 2-phosphate + ADP + H(+). It participates in isoprenoid biosynthesis; isopentenyl diphosphate biosynthesis via DXP pathway; isopentenyl diphosphate from 1-deoxy-D-xylulose 5-phosphate: step 3/6. In terms of biological role, catalyzes the phosphorylation of the position 2 hydroxy group of 4-diphosphocytidyl-2C-methyl-D-erythritol. The sequence is that of 4-diphosphocytidyl-2-C-methyl-D-erythritol kinase from Francisella tularensis subsp. tularensis (strain WY96-3418).